Here is a 110-residue protein sequence, read N- to C-terminus: MPAPYKKGSEKKGATLFKTRCLQCHTVEAGGPHKVGPNLHGVFGRHSGKASGYSYTDANIKKNVLWDEQTMSDYLENPKKYIPGTKMAFGGLKKEKDRNDIVTYMLKACK.

Cysteine 21, cysteine 24, histidine 25, and methionine 87 together coordinate heme c.

The protein belongs to the cytochrome c family. Binds 1 heme c group covalently per subunit.

It localises to the mitochondrion intermembrane space. Electron carrier protein. The oxidized form of the cytochrome c heme group can accept an electron from the heme group of the cytochrome c1 subunit of cytochrome reductase. Cytochrome c then transfers this electron to the cytochrome oxidase complex, the final protein carrier in the mitochondrial electron-transport chain. This Kluyveromyces lactis (strain ATCC 8585 / CBS 2359 / DSM 70799 / NBRC 1267 / NRRL Y-1140 / WM37) (Yeast) protein is Cytochrome c (CYCK).